The primary structure comprises 302 residues: Methionyl-tRNA formyltransferase (302 aa).

Residue 108 to 111 participates in (6S)-5,6,7,8-tetrahydrofolate binding; it reads SLLP. The segment covering 276–288 has biased composition (basic and acidic residues); it reads REGKRPMEPEEFL. The segment at 276 to 302 is disordered; it reads REGKRPMEPEEFLRGFPLPEGSRAHTA.

It belongs to the Fmt family.

It carries out the reaction L-methionyl-tRNA(fMet) + (6R)-10-formyltetrahydrofolate = N-formyl-L-methionyl-tRNA(fMet) + (6S)-5,6,7,8-tetrahydrofolate + H(+). Its function is as follows. Attaches a formyl group to the free amino group of methionyl-tRNA(fMet). The formyl group appears to play a dual role in the initiator identity of N-formylmethionyl-tRNA by promoting its recognition by IF2 and preventing the misappropriation of this tRNA by the elongation apparatus. The protein is Methionyl-tRNA formyltransferase of Cereibacter sphaeroides (strain KD131 / KCTC 12085) (Rhodobacter sphaeroides).